The sequence spans 453 residues: uncharacterized protein (453 aa).

The TRAM domain occupies 5-63 (LLKKNQSIELTIEDLTHDGSGVGKIDGYPLFIPNTLPGEKVTAKIIKLNKNYGFARMEN). The [4Fe-4S] cluster site is built by Cys76, Cys82, Cys85, and Cys162. Gln285, Tyr314, Glu335, and Asp383 together coordinate S-adenosyl-L-methionine. Cys410 functions as the Nucleophile in the catalytic mechanism.

This sequence belongs to the class I-like SAM-binding methyltransferase superfamily. RNA M5U methyltransferase family.

This is an uncharacterized protein from Listeria monocytogenes serotype 4b (strain F2365).